A 322-amino-acid polypeptide reads, in one-letter code: uncharacterized protein (322 aa).

To M.jannaschii MJ0640 and MJ0799.

This is an uncharacterized protein from Synechocystis sp. (strain ATCC 27184 / PCC 6803 / Kazusa).